A 400-amino-acid chain; its full sequence is 3-phenylpropionate/cinnamic acid dioxygenase ferredoxin--NAD(+) reductase component (400 aa).

5 to 36 (TIIIVGGGQAAAMAAASLRQQGFTGELHLFSD) provides a ligand contact to FAD. 146-174 (SVVIVGAGTIGLELAASATQRRCKVTVIE) contacts NAD(+).

The protein belongs to the bacterial ring-hydroxylating dioxygenase ferredoxin reductase family. This dioxygenase system consists of four proteins: the two subunits of the hydroxylase component (HcaE and HcaF), a ferredoxin (HcaC) and a ferredoxin reductase (HcaD). Requires FAD as cofactor.

The enzyme catalyses 2 reduced [2Fe-2S]-[ferredoxin] + NAD(+) + H(+) = 2 oxidized [2Fe-2S]-[ferredoxin] + NADH. The protein operates within aromatic compound metabolism; 3-phenylpropanoate degradation. Its function is as follows. Part of the multicomponent 3-phenylpropionate dioxygenase, that converts 3-phenylpropionic acid (PP) and cinnamic acid (CI) into 3-phenylpropionate-dihydrodiol (PP-dihydrodiol) and cinnamic acid-dihydrodiol (CI-dihydrodiol), respectively. This chain is 3-phenylpropionate/cinnamic acid dioxygenase ferredoxin--NAD(+) reductase component, found in Shigella sonnei (strain Ss046).